The primary structure comprises 472 residues: Transmembrane protein 8B (472 aa).

A compositionally biased stretch (low complexity) spans 1–10; sequence MNMPQSLGTQ. Residues 1 to 24 are disordered; the sequence is MNMPQSLGTQPLPPEPPSLGTPIE. Over 1 to 233 the chain is Extracellular; it reads MNMPQSLGTQ…ADALTYGFQL (233 aa). N100 is a glycosylation site (N-linked (GlcNAc...) asparagine). Residues 182 to 221 enclose the EGF-like domain; that stretch reads FLSPCVDDCGPYGQCKLLRTHNYLYAACECKAGWRGWGCT. 3 disulfide bridges follow: C186–C196, C190–C209, and C211–C220. A helical transmembrane segment spans residues 234–254; that stretch reads LSTLLLCLSNLMFLPPVVLAI. Over 255–257 the chain is Cytoplasmic; it reads RSR. A helical transmembrane segment spans residues 258-277; that stretch reads YVLEAAVYTFTMFFSTFYHA. Residues 278–292 are Extracellular-facing; that stretch reads CDQPGIVVFCIMDYD. The helical transmembrane segment at 293–313 threads the bilayer; the sequence is VLQFCDFLGSLMSVWVTVIAM. The Cytoplasmic segment spans residues 314-315; it reads AR. Residues 316-336 form a helical membrane-spanning segment; it reads LQPVIKQVLYLLGAMLLSMAL. The Extracellular portion of the chain corresponds to 337–342; the sequence is QLDRHG. The helical transmembrane segment at 343–363 threads the bilayer; sequence LWNLLGPSLFALGILATAWTV. Over 364-379 the chain is Cytoplasmic; that stretch reads RSVRRRHCYPPTWRRW. A helical transmembrane segment spans residues 380–400; it reads LFYLCPGSLIAGSAVLLYAFV. Residues 401-405 are Extracellular-facing; sequence ETRDN. Residues 406 to 426 traverse the membrane as a helical segment; that stretch reads YFYIHSIWHMLIAGSVGFLLP. The Cytoplasmic portion of the chain corresponds to 427-472; it reads PRAKTDRRVPSGARARGCGYQLCINEQEELGLVGPGGTTVSSICVS.

The protein belongs to the TMEM8 family. As to quaternary structure, may interact with EZR. In terms of processing, N-glycosylated.

It localises to the cell membrane. The protein resides in the cytoplasm. Its subcellular location is the nucleus. It is found in the mitochondrion. The protein localises to the endoplasmic reticulum. May function as a regulator of the EGFR pathway. Probable tumor suppressor which may function in cell growth, proliferation and adhesion. This is Transmembrane protein 8B (Tmem8b) from Mus musculus (Mouse).